A 426-amino-acid chain; its full sequence is Zinc finger CCCH domain-containing protein 15 (426 aa).

Residues 1 to 12 (MPPKKQAQAGGS) show a composition bias toward low complexity. 2 disordered regions span residues 1 to 30 (MPPK…KTFG) and 53 to 74 (GQQN…KDDK). A compositionally biased stretch (basic and acidic residues) spans 13–29 (KKAEQKKKEKIIEDKTF). The segment covering 53–62 (GQQNPRQVAQ) has biased composition (polar residues). The stretch at 61 to 86 (AQSEAEKKLKKDDKKKELQELNELFK) forms a coiled coil. The span at 64–74 (EAEKKLKKDDK) shows a compositional bias: basic and acidic residues. 2 C3H1-type zinc fingers span residues 99–126 (DPKS…HDLT) and 174–212 (PKTQ…HALP). Positions 218–285 (KKDKKKEEKE…RRKADFKAGK (68 aa)) form a coiled coil. Phosphoserine is present on serine 231. Residues 236-260 (IERERSALGPNVTKITLESFLAWKK) form a required for interaction with DRG1 region. The segment at 299–326 (PELVNDDDEEADDTRYTQGTGGDEVDDS) is disordered. A phosphoserine mark is found at serine 351, serine 360, and serine 381. Residues 358 to 411 (YTSDKDENKLSEASGGRAENGERSDLEEDNEREGTENGAIDAVPVDENLFTGED) are disordered.

This sequence belongs to the ZC3H15/TMA46 family. As to quaternary structure, interacts with DRG1; this interaction prevents DRG1 poly-ubiquitination and degradation by proteasome. DRG1-ZC3H15/DFRP1 complex co-sediments with polysomes. Associates with microtubules.

The protein resides in the cytoplasm. The protein localises to the nucleus. Functionally, protects DRG1 from proteolytic degradation. Stimulates DRG1 GTPase activity likely by increasing the affinity for the potassium ions. The chain is Zinc finger CCCH domain-containing protein 15 (ZC3H15) from Homo sapiens (Human).